The chain runs to 319 residues: Cobalamin biosynthesis protein CobD (319 aa).

Transmembrane regions (helical) follow at residues 55–75 (AVMW…VLAL), 78–98 (EIHP…VLAG), 153–173 (VDGI…LAMA), and 296–316 (LMWV…CLLV).

Belongs to the CobD/CbiB family.

The protein resides in the cell membrane. It participates in cofactor biosynthesis; adenosylcobalamin biosynthesis. Its function is as follows. Converts cobyric acid to cobinamide by the addition of aminopropanol on the F carboxylic group. The polypeptide is Cobalamin biosynthesis protein CobD (Citrobacter koseri (strain ATCC BAA-895 / CDC 4225-83 / SGSC4696)).